A 69-amino-acid chain; its full sequence is Large ribosomal subunit protein uL30 (69 aa).

The protein belongs to the universal ribosomal protein uL30 family. Part of the 50S ribosomal subunit.

This chain is Large ribosomal subunit protein uL30, found in Rhizobium etli (strain ATCC 51251 / DSM 11541 / JCM 21823 / NBRC 15573 / CFN 42).